The sequence spans 228 residues: 5'-methylthioadenosine/S-adenosylhomocysteine nucleosidase (228 aa).

Glutamate 11 (proton acceptor) is an active-site residue. Substrate-binding positions include glycine 77, isoleucine 151, and 172-173; that span reads ME. Aspartate 196 serves as the catalytic Proton donor.

This sequence belongs to the PNP/UDP phosphorylase family. MtnN subfamily.

The enzyme catalyses S-adenosyl-L-homocysteine + H2O = S-(5-deoxy-D-ribos-5-yl)-L-homocysteine + adenine. It catalyses the reaction S-methyl-5'-thioadenosine + H2O = 5-(methylsulfanyl)-D-ribose + adenine. It carries out the reaction 5'-deoxyadenosine + H2O = 5-deoxy-D-ribose + adenine. Its pathway is amino-acid biosynthesis; L-methionine biosynthesis via salvage pathway; S-methyl-5-thio-alpha-D-ribose 1-phosphate from S-methyl-5'-thioadenosine (hydrolase route): step 1/2. Its function is as follows. Catalyzes the irreversible cleavage of the glycosidic bond in both 5'-methylthioadenosine (MTA) and S-adenosylhomocysteine (SAH/AdoHcy) to adenine and the corresponding thioribose, 5'-methylthioribose and S-ribosylhomocysteine, respectively. Also cleaves 5'-deoxyadenosine, a toxic by-product of radical S-adenosylmethionine (SAM) enzymes, into 5-deoxyribose and adenine. The sequence is that of 5'-methylthioadenosine/S-adenosylhomocysteine nucleosidase from Staphylococcus saprophyticus subsp. saprophyticus (strain ATCC 15305 / DSM 20229 / NCIMB 8711 / NCTC 7292 / S-41).